A 220-amino-acid polypeptide reads, in one-letter code: ATP synthase subunit 5, mitochondrial (220 aa).

This sequence belongs to the ATPase delta chain family. As to quaternary structure, F-type ATPases have 2 components, CF(1) - the catalytic core - and CF(0) - the membrane proton channel. CF(1) has five subunits: alpha(3), beta(3), gamma(1), delta(1), epsilon(1). CF(0) has three main subunits: a, b and c.

It is found in the mitochondrion. The protein resides in the mitochondrion inner membrane. In terms of biological role, mitochondrial membrane ATP synthase (F(1)F(0) ATP synthase or Complex V) produces ATP from ADP in the presence of a proton gradient across the membrane which is generated by electron transport complexes of the respiratory chain. F-type ATPases consist of two structural domains, F(1) - containing the extramembraneous catalytic core and F(0) - containing the membrane proton channel, linked together by a central stalk and a peripheral stalk. During catalysis, ATP synthesis in the catalytic domain of F(1) is coupled via a rotary mechanism of the central stalk subunits to proton translocation. Part of the complex F(0) domain and the peripheric stalk, which acts as a stator to hold the catalytic alpha(3)beta(3) subcomplex and subunit a/ATP6 static relative to the rotary elements. The polypeptide is ATP synthase subunit 5, mitochondrial (atp-5) (Neurospora crassa (strain ATCC 24698 / 74-OR23-1A / CBS 708.71 / DSM 1257 / FGSC 987)).